A 69-amino-acid polypeptide reads, in one-letter code: UPF0337 protein XAC4007 (69 aa).

The protein belongs to the UPF0337 (CsbD) family.

The sequence is that of UPF0337 protein XAC4007 from Xanthomonas axonopodis pv. citri (strain 306).